Reading from the N-terminus, the 659-residue chain is Putative cysteine-rich receptor-like protein kinase 39 (659 aa).

The N-terminal stretch at 1 to 27 is a signal peptide; the sequence is MGKYSVLMIFIASSLLIVLQNVEIVNA. 2 consecutive Gnk2-homologous domains span residues 28–134 and 142–253; these read VGCT…NHST and PSVR…LYAF. At 28–289 the chain is on the extracellular side; it reads VGCTGSFFNG…KKKGRSIGYG (262 aa). N-linked (GlcNAc...) asparagine glycosylation is found at asparagine 38, asparagine 64, asparagine 122, asparagine 131, asparagine 157, asparagine 170, asparagine 259, and asparagine 274. The chain crosses the membrane as a helical span at residues 290-310; that stretch reads GIIAIVVVLTFINILVFIGYI. Over 311 to 659 the chain is Cytoplasmic; the sequence is KVYGRRKESY…DDVFTELSCR (349 aa). A Protein kinase domain is found at 353–619; it reads FSSENTLGQG…PTMSSVIIWL (267 aa). ATP-binding positions include 359 to 367 and lysine 381; that span reads LGQGGFGTV. Tyrosine 426 bears the Phosphotyrosine mark. The active-site Proton acceptor is aspartate 478. Phosphoserine is present on serine 482. The residue at position 518 (threonine 518) is a Phosphothreonine. Position 526 is a phosphotyrosine (tyrosine 526).

Belongs to the protein kinase superfamily. Ser/Thr protein kinase family. CRK subfamily.

The protein resides in the membrane. The catalysed reaction is L-seryl-[protein] + ATP = O-phospho-L-seryl-[protein] + ADP + H(+). It carries out the reaction L-threonyl-[protein] + ATP = O-phospho-L-threonyl-[protein] + ADP + H(+). This Arabidopsis thaliana (Mouse-ear cress) protein is Putative cysteine-rich receptor-like protein kinase 39 (CRK39).